A 97-amino-acid chain; its full sequence is ESAT-6-like protein EsxG (97 aa).

The protein belongs to the WXG100 family. CFP-10 subfamily. As to quaternary structure, forms a tight 1:1 complex with EsxH.

The protein resides in the secreted. The polypeptide is ESAT-6-like protein EsxG (Mycolicibacterium smegmatis (strain ATCC 700084 / mc(2)155) (Mycobacterium smegmatis)).